A 303-amino-acid chain; its full sequence is tRNA-cytidine(32) 2-sulfurtransferase (303 aa).

A PP-loop motif motif is present at residues Ser-45–Ser-50. Positions 120, 123, and 211 each coordinate [4Fe-4S] cluster.

This sequence belongs to the TtcA family. Homodimer. Mg(2+) is required as a cofactor. It depends on [4Fe-4S] cluster as a cofactor.

Its subcellular location is the cytoplasm. The enzyme catalyses cytidine(32) in tRNA + S-sulfanyl-L-cysteinyl-[cysteine desulfurase] + AH2 + ATP = 2-thiocytidine(32) in tRNA + L-cysteinyl-[cysteine desulfurase] + A + AMP + diphosphate + H(+). Its pathway is tRNA modification. Its function is as follows. Catalyzes the ATP-dependent 2-thiolation of cytidine in position 32 of tRNA, to form 2-thiocytidine (s(2)C32). The sulfur atoms are provided by the cysteine/cysteine desulfurase (IscS) system. The protein is tRNA-cytidine(32) 2-sulfurtransferase of Methylobacillus flagellatus (strain ATCC 51484 / DSM 6875 / VKM B-1610 / KT).